A 752-amino-acid chain; its full sequence is MAAPVVGDADLQSVRRIRLDVSGMSCAACASRVETKLNKIPGVRASVNFATRVATIDAVGMAADELCGVVEKAGYHAAPHTETTVLDKRTKDPDGAHARRLLRRLLVAAVLFVPLADLSTLFAIVPSARVPGWGYILTALAAPVVTWAAWPFHSVALRNARHRTTSMETLISVGIVAATAWSLSSVFGDQPPREGSGIWRAILNSDSIYLEVAAGVTVFVLAGRYFEARAKSKAGSALRALAELGAKNVAVLLPDGAELVIPASELKKRQRFVTRPGETIAADGVVVDGSAAIDMSAMTGEAKPVRAYPAASVVGGTVVMDGRLVIEATAVGADTQFAAMVRLVEQAQTQKARAQRLADHIAGVFVPVVFVIAGLAGAAWLVSGAGADRAFSVTLGVLVIACPCALGLATPTAMMVASGRGAQLGIFIKGYRALETIRSIDTVVFDKTGTLTVGQLAVSTVTMAGSGTSERDREEVLGLAAAVESASEHAMAAAIVAASPDPGPVNGFVAVAGCGVSGEVGGHHVEVGKPSWITRTTPCHDAALVSARLDGESRGETVVFVSVDGVVRAALTIADTLKDSAAAAVAALRSRGLRTILLTGDNRAAADAVAAQVGIDSAVADMLPEGKVDVIQRLREEGHTVAMVGDGINDGPALVGADLGLAIGRGTDVALGAADIILVRDDLNTVPQALDLARATMRTIRMNMIWAFGYNVAAIPIAAAGLLNPLIAGAAMAFSSFFVVSNSLRLRNFGAQ.

Residues Arg-15–Ala-78 enclose the HMA domain. A metal cation is bound by residues Cys-26 and Cys-29. 6 consecutive transmembrane segments (helical) span residues Leu-105–Val-125, Gly-132–Phe-152, Met-167–Phe-187, Ala-201–Leu-221, Ile-361–Leu-381, and Ala-390–Thr-410. Asp-446 (4-aspartylphosphate intermediate) is an active-site residue. The chain crosses the membrane as a helical span at residues Ala-714–Phe-734.

It belongs to the cation transport ATPase (P-type) (TC 3.A.3) family. Type IB subfamily.

It is found in the cell membrane. It carries out the reaction ATP + H2O = ADP + phosphate + H(+). The sequence is that of Cation-transporting P-type ATPase B (ctpB) from Mycobacterium bovis (strain ATCC BAA-935 / AF2122/97).